Reading from the N-terminus, the 417-residue chain is Serine hydroxymethyltransferase (417 aa).

(6S)-5,6,7,8-tetrahydrofolate contacts are provided by residues Leu117 and 121–123 (GHL). Lys226 bears the N6-(pyridoxal phosphate)lysine mark.

The protein belongs to the SHMT family. As to quaternary structure, homodimer. Pyridoxal 5'-phosphate serves as cofactor.

Its subcellular location is the cytoplasm. The enzyme catalyses (6R)-5,10-methylene-5,6,7,8-tetrahydrofolate + glycine + H2O = (6S)-5,6,7,8-tetrahydrofolate + L-serine. The protein operates within one-carbon metabolism; tetrahydrofolate interconversion. It functions in the pathway amino-acid biosynthesis; glycine biosynthesis; glycine from L-serine: step 1/1. Functionally, catalyzes the reversible interconversion of serine and glycine with tetrahydrofolate (THF) serving as the one-carbon carrier. This reaction serves as the major source of one-carbon groups required for the biosynthesis of purines, thymidylate, methionine, and other important biomolecules. Also exhibits THF-independent aldolase activity toward beta-hydroxyamino acids, producing glycine and aldehydes, via a retro-aldol mechanism. The chain is Serine hydroxymethyltransferase from Shouchella clausii (strain KSM-K16) (Alkalihalobacillus clausii).